The chain runs to 211 residues: Somatotropin (211 aa).

The N-terminal stretch at 1-23 (MASGFLLCPVLLAVFFMSPVEVG) is a signal peptide. His40 lines the Zn(2+) pocket. A disulfide bond links Cys73 and Cys184. A Zn(2+)-binding site is contributed by Glu193. Cys201 and Cys209 form a disulfide bridge.

It belongs to the somatotropin/prolactin family.

The protein resides in the secreted. Growth hormone plays an important role in growth control and is involved in the regulation of several anabolic processes. Implicated as an osmoregulatory substance important for seawater adaptation. This Lepisosteus osseus (Long-nosed gar) protein is Somatotropin (gh).